The sequence spans 213 residues: Large ribosomal subunit protein uL4 (213 aa).

The disordered stretch occupies residues 41 to 75; that stretch reads GTASTKTRAEVSRSGKKMYSQKGTGNARHGDRSVP.

It belongs to the universal ribosomal protein uL4 family. Part of the 50S ribosomal subunit.

Its function is as follows. One of the primary rRNA binding proteins, this protein initially binds near the 5'-end of the 23S rRNA. It is important during the early stages of 50S assembly. It makes multiple contacts with different domains of the 23S rRNA in the assembled 50S subunit and ribosome. In terms of biological role, forms part of the polypeptide exit tunnel. The protein is Large ribosomal subunit protein uL4 of Deinococcus geothermalis (strain DSM 11300 / CIP 105573 / AG-3a).